A 35-amino-acid polypeptide reads, in one-letter code: Photosystem II reaction center protein T (35 aa).

The chain crosses the membrane as a helical span at residues 3–23 (ALVYTFLLVSTLGIIFFAIFF).

The protein belongs to the PsbT family. In terms of assembly, PSII is composed of 1 copy each of membrane proteins PsbA, PsbB, PsbC, PsbD, PsbE, PsbF, PsbH, PsbI, PsbJ, PsbK, PsbL, PsbM, PsbT, PsbY, PsbZ, Psb30/Ycf12, at least 3 peripheral proteins of the oxygen-evolving complex and a large number of cofactors. It forms dimeric complexes.

Its subcellular location is the plastid. The protein localises to the chloroplast thylakoid membrane. Found at the monomer-monomer interface of the photosystem II (PS II) dimer, plays a role in assembly and dimerization of PSII. PSII is a light-driven water plastoquinone oxidoreductase, using light energy to abstract electrons from H(2)O, generating a proton gradient subsequently used for ATP formation. In Ginkgo biloba (Ginkgo), this protein is Photosystem II reaction center protein T.